The following is a 105-amino-acid chain: Nitrogen fixation nifHD region GlnB-like protein 1 (105 aa).

Belongs to the P(II) protein family.

Functionally, could be involved in the regulation of nitrogen fixation. This chain is Nitrogen fixation nifHD region GlnB-like protein 1 (glnBA), found in Methanothermococcus thermolithotrophicus (Methanococcus thermolithotrophicus).